Reading from the N-terminus, the 95-residue chain is Aspartyl/glutamyl-tRNA(Asn/Gln) amidotransferase subunit C (95 aa).

A disordered region spans residues G74–E95.

Belongs to the GatC family. Heterotrimer of A, B and C subunits.

The enzyme catalyses L-glutamyl-tRNA(Gln) + L-glutamine + ATP + H2O = L-glutaminyl-tRNA(Gln) + L-glutamate + ADP + phosphate + H(+). It catalyses the reaction L-aspartyl-tRNA(Asn) + L-glutamine + ATP + H2O = L-asparaginyl-tRNA(Asn) + L-glutamate + ADP + phosphate + 2 H(+). In terms of biological role, allows the formation of correctly charged Asn-tRNA(Asn) or Gln-tRNA(Gln) through the transamidation of misacylated Asp-tRNA(Asn) or Glu-tRNA(Gln) in organisms which lack either or both of asparaginyl-tRNA or glutaminyl-tRNA synthetases. The reaction takes place in the presence of glutamine and ATP through an activated phospho-Asp-tRNA(Asn) or phospho-Glu-tRNA(Gln). This chain is Aspartyl/glutamyl-tRNA(Asn/Gln) amidotransferase subunit C, found in Salinibacter ruber (strain DSM 13855 / M31).